Consider the following 892-residue polypeptide: Translation initiation factor IF-2 (892 aa).

Residues Gln138 to Val185 show a composition bias toward basic and acidic residues. 2 disordered regions span residues Gln138–Ser250 and Ala262–His298. Residues Leu207 to Pro219 show a composition bias toward low complexity. In terms of domain architecture, tr-type G spans Pro391–Lys560. Residues Gly400–Thr407, Asp446–His450, and Ser500–Asp503 each bind GTP.

Belongs to the TRAFAC class translation factor GTPase superfamily. Classic translation factor GTPase family. IF-2 subfamily.

Its subcellular location is the cytoplasm. One of the essential components for the initiation of protein synthesis. Protects formylmethionyl-tRNA from spontaneous hydrolysis and promotes its binding to the 30S ribosomal subunits. Also involved in the hydrolysis of GTP during the formation of the 70S ribosomal complex. This Xylella fastidiosa (strain Temecula1 / ATCC 700964) protein is Translation initiation factor IF-2.